Consider the following 92-residue polypeptide: Phenol 2-monooxygenase, auxiliary component DmpK (92 aa).

In terms of assembly, homotrimer or homotetramer. Interacts with the phenol hydroxylase components DmpL (P1 component) and DmpN (P3 component).

It participates in aromatic compound metabolism; phenol degradation. In terms of biological role, dmpK is an auxiliary protein associated with the multicomponent phenol hydroxylase DmpLMNOP and it may be involved in the post-translational incorporation of iron into the oxygenase component of the phenol hydroxylase. Required for growth on phenol but not for in vitro phenol hydroxylase activity. In Pseudomonas sp. (strain CF600), this protein is Phenol 2-monooxygenase, auxiliary component DmpK.